Reading from the N-terminus, the 459-residue chain is Interleukin-1 receptor-associated kinase 4 (459 aa).

At M1 the chain carries N-acetylmethionine. The Death domain maps to 20–104; sequence RKLSDFIDPQ…APATLLLPDA (85 aa). N6-acetyllysine is present on K34. Residues 115-161 form a disordered region; that stretch reads REAATVAQTHGPCQEKDRTSVMPMPKLEHSCEPPDSSSPDNRSVESS. One can recognise a Protein kinase domain in the interval 186-454; that stretch reads SAGGNRMGEG…PDIAKVQQLL (269 aa). ATP is bound by residues 192–200 and K213; that span reads MGEGGFGVV. Residue D311 is the Proton acceptor of the active site. ATP contacts are provided by residues 313–316 and D329; that span reads KSAN. Residues T342 and T345 each carry the phosphothreonine modification. Residue S346 is modified to Phosphoserine.

Belongs to the protein kinase superfamily. TKL Ser/Thr protein kinase family. Pelle subfamily. As to quaternary structure, associates with MYD88 and IRAK2 to form a ternary complex called the Myddosome. Once phosphorylated, IRAK4 dissociates from the receptor complex and then associates with the TNF receptor-associated factor 6 (TRAF6), IRAK1, and PELI1; this intermediate complex is required for subsequent NF-kappa-B activation. Direct binding of SMAD6 to PELI1 prevents complex formation and hence negatively regulates IL1R-TLR signaling and eventually NF-kappa-B-mediated gene expression. Interacts with IL1RL1. Interacts (when phosphorylated) with IRAK1. May interact (when phosphorylated) with IRAK3. Mg(2+) serves as cofactor. Post-translationally, phosphorylated.

The protein localises to the cytoplasm. The enzyme catalyses L-seryl-[protein] + ATP = O-phospho-L-seryl-[protein] + ADP + H(+). It catalyses the reaction L-threonyl-[protein] + ATP = O-phospho-L-threonyl-[protein] + ADP + H(+). Serine/threonine-protein kinase that plays a critical role in initiating innate immune response against foreign pathogens. Involved in Toll-like receptor (TLR) and IL-1R signaling pathways. Is rapidly recruited by MYD88 to the receptor-signaling complex upon TLR activation to form the Myddosome together with IRAK2. Phosphorylates initially IRAK1, thus stimulating the kinase activity and intensive autophosphorylation of IRAK1. Phosphorylates E3 ubiquitin ligases Pellino proteins (PELI1, PELI2 and PELI3) to promote pellino-mediated polyubiquitination of IRAK1. Then, the ubiquitin-binding domain of IKBKG/NEMO binds to polyubiquitinated IRAK1 bringing together the IRAK1-MAP3K7/TAK1-TRAF6 complex and the NEMO-IKKA-IKKB complex. In turn, MAP3K7/TAK1 activates IKKs (CHUK/IKKA and IKBKB/IKKB) leading to NF-kappa-B nuclear translocation and activation. Alternatively, phosphorylates TIRAP to promote its ubiquitination and subsequent degradation. Phosphorylates NCF1 and regulates NADPH oxidase activation after LPS stimulation suggesting a similar mechanism during microbial infections. The chain is Interleukin-1 receptor-associated kinase 4 (Irak4) from Mus musculus (Mouse).